A 190-amino-acid polypeptide reads, in one-letter code: GTP cyclohydrolase 1 (190 aa).

3 residues coordinate Zn(2+): C75, H78, and C146.

It belongs to the GTP cyclohydrolase I family. In terms of assembly, homomer.

The enzyme catalyses GTP + H2O = 7,8-dihydroneopterin 3'-triphosphate + formate + H(+). Its pathway is cofactor biosynthesis; 7,8-dihydroneopterin triphosphate biosynthesis; 7,8-dihydroneopterin triphosphate from GTP: step 1/1. This chain is GTP cyclohydrolase 1, found in Campylobacter lari (strain RM2100 / D67 / ATCC BAA-1060).